Consider the following 308-residue polypeptide: Porphobilinogen deaminase (308 aa).

Residue C241 is modified to S-(dipyrrolylmethanemethyl)cysteine.

The protein belongs to the HMBS family. In terms of assembly, monomer. Dipyrromethane is required as a cofactor.

It catalyses the reaction 4 porphobilinogen + H2O = hydroxymethylbilane + 4 NH4(+). It functions in the pathway porphyrin-containing compound metabolism; protoporphyrin-IX biosynthesis; coproporphyrinogen-III from 5-aminolevulinate: step 2/4. Its function is as follows. Tetrapolymerization of the monopyrrole PBG into the hydroxymethylbilane pre-uroporphyrinogen in several discrete steps. This is Porphobilinogen deaminase from Staphylococcus aureus (strain bovine RF122 / ET3-1).